Reading from the N-terminus, the 354-residue chain is 5,10-methenyltetrahydromethanopterin hydrogenase (354 aa).

Belongs to the HMD family.

The catalysed reaction is 5,10-methenyl-5,6,7,8-tetrahydromethanopterin + H2 = 5,10-methylenetetrahydromethanopterin + H(+). It functions in the pathway one-carbon metabolism; methanogenesis from CO(2); 5,10-methylene-5,6,7,8-tetrahydromethanopterin from 5,10-methenyl-5,6,7,8-tetrahydromethanopterin (hydrogen route): step 1/1. Catalyzes the reversible reduction of methenyl-H(4)MPT(+) to methylene-H(4)MPT. This is 5,10-methenyltetrahydromethanopterin hydrogenase from Methanococcus maripaludis (strain C5 / ATCC BAA-1333).